The sequence spans 292 residues: Tumor necrosis factor alpha-induced protein 8-like protein 3 (292 aa).

Residues 81–107 (DAQPAARSMDSDSGEQSEGEPVTAAGP) form a disordered region. The segment at 109–292 (VFSSKSLALQ…INKLLDEKVL (184 aa)) is binding to phosphoinositides.

This sequence belongs to the TNFAIP8 family. In terms of tissue distribution, widely expressed (at protein level). Highly expressed in most carcinoma cell lines.

It is found in the cytoplasm. It localises to the cell membrane. In terms of biological role, acts as a lipid transfer protein. Preferentially captures and shuttles two lipid second messengers, i.e., phosphatidylinositol 4,5- bisphosphate and phosphatidylinositol 3,4,5-trisphosphate and increases their levels in the plasma membrane. Additionally, may also function as a lipid-presenting protein to enhance the activity of the PI3K-AKT and MEK-ERK pathways. May act as a regulator of tumorigenesis through its activation of phospholipid signaling. The polypeptide is Tumor necrosis factor alpha-induced protein 8-like protein 3 (TNFAIP8L3) (Homo sapiens (Human)).